Reading from the N-terminus, the 257-residue chain is Dihydroorotate dehydrogenase B (NAD(+)), electron transfer subunit (257 aa).

The 101-residue stretch at 2–102 (IGRERMTVAS…LGPLGNGFPL (101 aa)) folds into the FAD-binding FR-type domain. FAD is bound by residues 53 to 56 (RPLS), 70 to 72 (IYR), and 77 to 78 (GT). [2Fe-2S] cluster is bound by residues cysteine 221, cysteine 226, cysteine 229, and cysteine 244.

The protein belongs to the PyrK family. As to quaternary structure, heterotetramer of 2 PyrK and 2 PyrD type B subunits. [2Fe-2S] cluster is required as a cofactor. The cofactor is FAD.

The protein operates within pyrimidine metabolism; UMP biosynthesis via de novo pathway; orotate from (S)-dihydroorotate (NAD(+) route): step 1/1. In terms of biological role, responsible for channeling the electrons from the oxidation of dihydroorotate from the FMN redox center in the PyrD type B subunit to the ultimate electron acceptor NAD(+). The sequence is that of Dihydroorotate dehydrogenase B (NAD(+)), electron transfer subunit from Bacillus caldolyticus.